A 41-amino-acid chain; its full sequence is Cytochrome b559 subunit beta (41 aa).

Residues Trp16–Ala32 traverse the membrane as a helical segment. His20 contributes to the heme binding site.

This sequence belongs to the PsbE/PsbF family. As to quaternary structure, heterodimer of an alpha subunit and a beta subunit. PSII is composed of 1 copy each of membrane proteins PsbA, PsbB, PsbC, PsbD, PsbE, PsbF, PsbH, PsbI, PsbJ, PsbK, PsbL, PsbM, PsbT, PsbX, PsbY, PsbZ, Psb30/Ycf12, at least 3 peripheral proteins of the oxygen-evolving complex and a large number of cofactors. It forms dimeric complexes. The cofactor is heme b.

It localises to the plastid. The protein resides in the chloroplast thylakoid membrane. In terms of biological role, this b-type cytochrome is tightly associated with the reaction center of photosystem II (PSII). PSII is a light-driven water:plastoquinone oxidoreductase that uses light energy to abstract electrons from H(2)O, generating O(2) and a proton gradient subsequently used for ATP formation. It consists of a core antenna complex that captures photons, and an electron transfer chain that converts photonic excitation into a charge separation. The protein is Cytochrome b559 subunit beta of Chlorella vulgaris (Green alga).